The following is a 115-amino-acid chain: Histidine-rich carboxyl terminus protein 1 (115 aa).

The helical transmembrane segment at Ala9 to Ala29 threads the bilayer. The interval Gly86–Arg115 is disordered. The span at Leu87–Arg115 shows a compositional bias: basic residues.

The protein resides in the membrane. The sequence is that of Histidine-rich carboxyl terminus protein 1 (HRCT1) from Homo sapiens (Human).